A 338-amino-acid chain; its full sequence is Glutamyl-tRNA reductase (338 aa).

Substrate-binding positions include 50–53 (TCHR), Ser-102, 107–109 (ETE), and Gln-113. Cys-51 serves as the catalytic Nucleophile. An NADP(+)-binding site is contributed by 181–186 (GYSDIN).

Belongs to the glutamyl-tRNA reductase family. In terms of assembly, homodimer.

It carries out the reaction (S)-4-amino-5-oxopentanoate + tRNA(Glu) + NADP(+) = L-glutamyl-tRNA(Glu) + NADPH + H(+). It functions in the pathway porphyrin-containing compound metabolism; protoporphyrin-IX biosynthesis; 5-aminolevulinate from L-glutamyl-tRNA(Glu): step 1/2. Catalyzes the NADPH-dependent reduction of glutamyl-tRNA(Glu) to glutamate 1-semialdehyde (GSA). The polypeptide is Glutamyl-tRNA reductase (Chlamydia caviae (strain ATCC VR-813 / DSM 19441 / 03DC25 / GPIC) (Chlamydophila caviae)).